Reading from the N-terminus, the 118-residue chain is Large ribosomal subunit protein bL20 (118 aa).

This sequence belongs to the bacterial ribosomal protein bL20 family.

Binds directly to 23S ribosomal RNA and is necessary for the in vitro assembly process of the 50S ribosomal subunit. It is not involved in the protein synthesizing functions of that subunit. The chain is Large ribosomal subunit protein bL20 from Enterobacter sp. (strain 638).